We begin with the raw amino-acid sequence, 165 residues long: MAKKPKAVKDSNNQVVATNRKARHNYSILDTYEAGIALMGTEVKSLREGQASLADAFATVDDGEIWLRNLHIPEYHHGTWTNHAPRRNRKLLMHRREIDNLVGKIRDGNLTLVPLSLYFTGGKVKVELALARGKQAHDKRQDMARRDAQREVTRELGRRVKGMTS.

Positions 135–158 (QAHDKRQDMARRDAQREVTRELGR) are enriched in basic and acidic residues. The segment at 135–165 (QAHDKRQDMARRDAQREVTRELGRRVKGMTS) is disordered.

Belongs to the SmpB family.

Its subcellular location is the cytoplasm. Its function is as follows. Required for rescue of stalled ribosomes mediated by trans-translation. Binds to transfer-messenger RNA (tmRNA), required for stable association of tmRNA with ribosomes. tmRNA and SmpB together mimic tRNA shape, replacing the anticodon stem-loop with SmpB. tmRNA is encoded by the ssrA gene; the 2 termini fold to resemble tRNA(Ala) and it encodes a 'tag peptide', a short internal open reading frame. During trans-translation Ala-aminoacylated tmRNA acts like a tRNA, entering the A-site of stalled ribosomes, displacing the stalled mRNA. The ribosome then switches to translate the ORF on the tmRNA; the nascent peptide is terminated with the 'tag peptide' encoded by the tmRNA and targeted for degradation. The ribosome is freed to recommence translation, which seems to be the essential function of trans-translation. The polypeptide is SsrA-binding protein (Mycolicibacterium vanbaalenii (strain DSM 7251 / JCM 13017 / BCRC 16820 / KCTC 9966 / NRRL B-24157 / PYR-1) (Mycobacterium vanbaalenii)).